Consider the following 318-residue polypeptide: Type II restriction enzyme HaeIII (318 aa).

It catalyses the reaction Endonucleolytic cleavage of DNA to give specific double-stranded fragments with terminal 5'-phosphates.. A P subtype restriction enzyme that recognizes the double-stranded sequence 5'-GGCC-3' and cleaves after G-2. This is Type II restriction enzyme HaeIII (haeIIIR) from Haemophilus aegyptius.